Consider the following 109-residue polypeptide: Large ribosomal subunit protein uL24 (109 aa).

Positions 1 to 24 (MANVTTDIKRNDTVAVTSGKDKGK) are disordered.

It belongs to the universal ribosomal protein uL24 family. In terms of assembly, part of the 50S ribosomal subunit.

Functionally, one of two assembly initiator proteins, it binds directly to the 5'-end of the 23S rRNA, where it nucleates assembly of the 50S subunit. One of the proteins that surrounds the polypeptide exit tunnel on the outside of the subunit. This Koribacter versatilis (strain Ellin345) protein is Large ribosomal subunit protein uL24.